Consider the following 645-residue polypeptide: Translation factor GUF1, mitochondrial (645 aa).

A tr-type G domain is found at 44–228 (ENYRNFSIVA…AIIDRIPPPT (185 aa)). Residues 53 to 60 (AHVDHGKS), 120 to 124 (DTPGH), and 174 to 177 (NKID) contribute to the GTP site.

This sequence belongs to the TRAFAC class translation factor GTPase superfamily. Classic translation factor GTPase family. LepA subfamily.

The protein resides in the mitochondrion inner membrane. It carries out the reaction GTP + H2O = GDP + phosphate + H(+). In terms of biological role, promotes mitochondrial protein synthesis. May act as a fidelity factor of the translation reaction, by catalyzing a one-codon backward translocation of tRNAs on improperly translocated ribosomes. Binds to mitochondrial ribosomes in a GTP-dependent manner. The protein is Translation factor GUF1, mitochondrial of Saccharomyces cerevisiae (strain RM11-1a) (Baker's yeast).